A 190-amino-acid chain; its full sequence is UPF0301 protein RSc0675 (190 aa).

It belongs to the UPF0301 (AlgH) family.

This chain is UPF0301 protein RSc0675, found in Ralstonia nicotianae (strain ATCC BAA-1114 / GMI1000) (Ralstonia solanacearum).